A 95-amino-acid chain; its full sequence is Protein TusB (95 aa).

Belongs to the DsrH/TusB family. As to quaternary structure, heterohexamer, formed by a dimer of trimers. The hexameric TusBCD complex contains 2 copies each of TusB, TusC and TusD. The TusBCD complex interacts with TusE.

The protein localises to the cytoplasm. In terms of biological role, part of a sulfur-relay system required for 2-thiolation of 5-methylaminomethyl-2-thiouridine (mnm(5)s(2)U) at tRNA wobble positions. This chain is Protein TusB, found in Shigella sonnei (strain Ss046).